Consider the following 385-residue polypeptide: Probable thioesterase PNKD (385 aa).

Polar residues predominate over residues 32-42 (KASQNRTRALQ). The segment at 32–56 (KASQNRTRALQSHSSPECKEEPEPL) is disordered. Val121 carries the post-translational modification Phosphoserine. His172, His174, Asp176, His177, His229, Asp253, and His291 together coordinate Zn(2+).

It belongs to the metallo-beta-lactamase superfamily. Glyoxalase II family. In terms of assembly, isoform 2 interacts with the sarcomeric proteins, MRLC2, MYOM1 and ENO3. Zn(2+) is required as a cofactor. In terms of processing, undergoes cleavage at the N-terminus. As to expression, expressed in many discrete areas of the brain.

The protein localises to the cell membrane. The protein resides in the mitochondrion. Its subcellular location is the cytoplasm. The catalysed reaction is a thioester + H2O = a thiol + a carboxylate + H(+). Probable thioesterase that may play a role in cellular detoxification processes; it likely acts on a yet-unknown alpha-hydroxythioester substrate. In vitro, it is able to catalyze the hydrolysis of S-D-lactoyl-glutathione to form glutathione and D-lactic acid at very low rate, though this reaction is not physiologically relevant in vivo. The sequence is that of Probable thioesterase PNKD (Pnkd) from Mus musculus (Mouse).